Reading from the N-terminus, the 284-residue chain is RNA polymerase sigma factor RpoH (284 aa).

Residues 53-122 (LILSHLRFVV…IHEYVLRNWR (70 aa)) are sigma-70 factor domain-2. The short motif at 77–80 (DLIQ) is the Interaction with polymerase core subunit RpoC element. The interval 228 to 280 (AMQGLDERSQDIIRARWLDEDNKSTLQELADRYGVSAERVRQLEKNAMKKLRA) is sigma-70 factor domain-4. The H-T-H motif DNA-binding region spans 253 to 272 (LQELADRYGVSAERVRQLEK).

This sequence belongs to the sigma-70 factor family. RpoH subfamily. Interacts with the RNA polymerase core enzyme.

It localises to the cytoplasm. Its function is as follows. Sigma factors are initiation factors that promote the attachment of RNA polymerase to specific initiation sites and are then released. This sigma factor is involved in regulation of expression of heat shock genes. This chain is RNA polymerase sigma factor RpoH, found in Escherichia coli O6:H1 (strain CFT073 / ATCC 700928 / UPEC).